The sequence spans 77 residues: uncharacterized protein (77 aa).

This is an uncharacterized protein from Rickettsia prowazekii (strain Madrid E).